We begin with the raw amino-acid sequence, 222 residues long: Pyridoxal phosphate homeostasis protein (222 aa).

N6-(pyridoxal phosphate)lysine is present on lysine 35.

The protein belongs to the pyridoxal phosphate-binding protein YggS/PROSC family.

Pyridoxal 5'-phosphate (PLP)-binding protein, which is involved in PLP homeostasis. This is Pyridoxal phosphate homeostasis protein from Helicobacter pylori (strain ATCC 700392 / 26695) (Campylobacter pylori).